An 87-amino-acid chain; its full sequence is Small ribosomal subunit protein bS20 (87 aa).

It belongs to the bacterial ribosomal protein bS20 family.

Functionally, binds directly to 16S ribosomal RNA. This Mycoplasma pneumoniae (strain ATCC 29342 / M129 / Subtype 1) (Mycoplasmoides pneumoniae) protein is Small ribosomal subunit protein bS20.